A 615-amino-acid chain; its full sequence is Extracellular metalloproteinase 1 (615 aa).

An N-terminal signal peptide occupies residues Ser1–Ala8. Residues His9–His235 constitute a propeptide that is removed on maturation. Asn276 is a glycosylation site (N-linked (GlcNAc...) asparagine). Zn(2+) is bound at residue His419. Glu420 is a catalytic residue. His423 is a Zn(2+) binding site. 3 N-linked (GlcNAc...) asparagine glycosylation sites follow: Asn464, Asn583, and Asn612.

This sequence belongs to the peptidase M36 family. Requires Zn(2+) as cofactor.

It localises to the secreted. Secreted metalloproteinase probably acting as a virulence factor. The protein is Extracellular metalloproteinase 1 (MEP1) of Trichophyton equinum (Horse ringworm fungus).